The following is a 979-amino-acid chain: UPF0182 protein BCG_0095 (979 aa).

The next 7 membrane-spanning stretches (helical) occupy residues Leu19 to Ile39, Leu63 to Leu83, Leu114 to Asp134, Trp174 to Gly194, Val211 to Asp231, Lys260 to Leu280, and Met288 to Met308. The tract at residues Gly898 to Ala948 is disordered. Residues Val902–Ser912 show a composition bias toward low complexity. A compositionally biased stretch (pro residues) spans Ala913–Pro946.

It belongs to the UPF0182 family.

Its subcellular location is the cell membrane. The chain is UPF0182 protein BCG_0095 from Mycobacterium bovis (strain BCG / Pasteur 1173P2).